The following is a 257-amino-acid chain: NAD-capped RNA hydrolase NudC (257 aa).

Arg69 provides a ligand contact to substrate. Zn(2+) is bound by residues Cys98 and Cys101. Residue Glu111 participates in substrate binding. Zn(2+)-binding residues include Cys116 and Cys119. A substrate-binding site is contributed by Tyr124. Residues 125 to 248 (PQIAPCIIVA…TVARRLIEDT (124 aa)) enclose the Nudix hydrolase domain. Residues Ala158, Glu174, and Glu178 each contribute to the a divalent metal cation site. The short motif at 159 to 180 (GFVEVGETLEQAVAREVMEESG) is the Nudix box element. Substrate is bound at residue 192–199 (QPWPFPQS). Glu219 serves as a coordination point for a divalent metal cation. Ala241 contacts substrate.

Belongs to the Nudix hydrolase family. NudC subfamily. In terms of assembly, homodimer. It depends on Mg(2+) as a cofactor. Requires Mn(2+) as cofactor. The cofactor is Zn(2+).

The catalysed reaction is a 5'-end NAD(+)-phospho-ribonucleoside in mRNA + H2O = a 5'-end phospho-adenosine-phospho-ribonucleoside in mRNA + beta-nicotinamide D-ribonucleotide + 2 H(+). The enzyme catalyses NAD(+) + H2O = beta-nicotinamide D-ribonucleotide + AMP + 2 H(+). It carries out the reaction NADH + H2O = reduced beta-nicotinamide D-ribonucleotide + AMP + 2 H(+). Its function is as follows. mRNA decapping enzyme that specifically removes the nicotinamide adenine dinucleotide (NAD) cap from a subset of mRNAs by hydrolyzing the diphosphate linkage to produce nicotinamide mononucleotide (NMN) and 5' monophosphate mRNA. The NAD-cap is present at the 5'-end of some mRNAs and stabilizes RNA against 5'-processing. Has preference for mRNAs with a 5'-end purine. Catalyzes the hydrolysis of a broad range of dinucleotide pyrophosphates. This chain is NAD-capped RNA hydrolase NudC, found in Salmonella typhi.